A 453-amino-acid chain; its full sequence is GTPase Der (453 aa).

EngA-type G domains follow at residues 3 to 167 and 187 to 360; these read PIIV…ISEK and IKVA…EDSK. Residues 9 to 16, 57 to 61, 119 to 122, 193 to 200, 240 to 244, and 305 to 308 contribute to the GTP site; these read GRTNVGKS, DTAGL, NKID, GRPNVGKS, DTAGA, and NKCD. Residues 361-445 enclose the KH-like domain; it reads RKISTSTLIK…PIQIQFKDNE (85 aa).

The protein belongs to the TRAFAC class TrmE-Era-EngA-EngB-Septin-like GTPase superfamily. EngA (Der) GTPase family. In terms of assembly, associates with the 50S ribosomal subunit.

GTPase that plays an essential role in the late steps of ribosome biogenesis. The sequence is that of GTPase Der from Buchnera aphidicola subsp. Acyrthosiphon pisum (strain 5A).